Consider the following 659-residue polypeptide: Exoribonuclease 2 (659 aa).

Residues 189-532 (RRDLTALHFV…NHRLIKACLA (344 aa)) enclose the RNB domain. Residues 577 to 659 (NPEFRAEVQD…ETRSLIGNLV (83 aa)) enclose the S1 motif domain.

It belongs to the RNR ribonuclease family. RNase II subfamily.

Its subcellular location is the cytoplasm. It catalyses the reaction Exonucleolytic cleavage in the 3'- to 5'-direction to yield nucleoside 5'-phosphates.. In terms of biological role, involved in mRNA degradation. Hydrolyzes single-stranded polyribonucleotides processively in the 3' to 5' direction. The protein is Exoribonuclease 2 of Mannheimia succiniciproducens (strain KCTC 0769BP / MBEL55E).